Consider the following 140-residue polypeptide: Large ribosomal subunit protein uL15 (140 aa).

Positions 1–32 (MDTKKFRGSRTCGGGTHKNRRGAGNRGGRGKA) are disordered.

It belongs to the universal ribosomal protein uL15 family. Part of the 50S ribosomal subunit.

Its function is as follows. Binds to the 23S rRNA. The protein is Large ribosomal subunit protein uL15 of Methanosarcina acetivorans (strain ATCC 35395 / DSM 2834 / JCM 12185 / C2A).